Reading from the N-terminus, the 609-residue chain is UvrABC system protein C (609 aa).

Residues Ser16–Val94 enclose the GIY-YIG domain. The UVR domain maps to Gln203–Val238.

This sequence belongs to the UvrC family. As to quaternary structure, interacts with UvrB in an incision complex.

It localises to the cytoplasm. Functionally, the UvrABC repair system catalyzes the recognition and processing of DNA lesions. UvrC both incises the 5' and 3' sides of the lesion. The N-terminal half is responsible for the 3' incision and the C-terminal half is responsible for the 5' incision. The polypeptide is UvrABC system protein C (Shewanella baltica (strain OS195)).